Consider the following 125-residue polypeptide: Large ribosomal subunit protein bL12 (125 aa).

It belongs to the bacterial ribosomal protein bL12 family. In terms of assembly, homodimer. Part of the ribosomal stalk of the 50S ribosomal subunit. Forms a multimeric L10(L12)X complex, where L10 forms an elongated spine to which 2 to 4 L12 dimers bind in a sequential fashion. Binds GTP-bound translation factors.

Functionally, forms part of the ribosomal stalk which helps the ribosome interact with GTP-bound translation factors. Is thus essential for accurate translation. This is Large ribosomal subunit protein bL12 from Thermus thermophilus (strain ATCC BAA-163 / DSM 7039 / HB27).